We begin with the raw amino-acid sequence, 170 residues long: Transcriptional repressor NrdR (170 aa).

A zinc finger spans residues 3–34 (CPFCGTQDTKVVDSRLVSEGAQVRRRRTCIHC). Residues 49 to 139 (PKLIKSDGSR…VYRSFKDISE (91 aa)) form the ATP-cone domain. Residues 151-170 (SVSIPKSKKTAPESKKEDQA) form a disordered region. The span at 160–170 (TAPESKKEDQA) shows a compositional bias: basic and acidic residues.

This sequence belongs to the NrdR family. Requires Zn(2+) as cofactor.

Functionally, negatively regulates transcription of bacterial ribonucleotide reductase nrd genes and operons by binding to NrdR-boxes. The protein is Transcriptional repressor NrdR of Marinomonas sp. (strain MWYL1).